We begin with the raw amino-acid sequence, 55 residues long: Trypsin inhibitor (55 aa).

In terms of domain architecture, Kazal-like spans 1–55; that stretch reads AHMDCTEFNPLCRCNKMLGDLICAVIGDAKEEHRNMCALCCEHPGGFEYSNGPCE. 4 disulfide bridges follow: Cys-5-Cys-40, Cys-12-Cys-41, Cys-14-Cys-37, and Cys-23-Cys-54.

It localises to the secreted. Its function is as follows. Potent inhibitor of trypsin. This is Trypsin inhibitor from Halocynthia roretzi (Sea squirt).